The chain runs to 21 residues: Apolipophorin 2 (21 aa).

As to expression, expressed in hemolymph.

The protein resides in the secreted. In terms of biological role, constitutes the major component of lipophorin, which mediates transport for various types of lipids in hemolymph. Acts by forming lipoprotein particles that bind lipoproteins and lipids. This chain is Apolipophorin 2, found in Galleria mellonella (Greater wax moth).